We begin with the raw amino-acid sequence, 549 residues long: Cation/acetate symporter ActP (549 aa).

The next 13 membrane-spanning stretches (helical) occupy residues 33–53 (WQAIIMFLIFVVFTLGITYWA), 77–97 (LAIAGDYMSAASFLGISALVF), 103–123 (GLIYSLGFLVGWPIILFLIAE), 148–168 (ILSACGSLVVVALYLIAQMVG), 183–203 (IAVVLVGVLMMMYVLFGGMLA), 206–226 (WVQIIKAVLLLFGASFMAFMV), 262–282 (ISALSLGLGLMFGTAGLPHIL), 303–323 (GFMGYFYILTFIIGFGAIMLV), 355–375 (LFLGFISAVAFATILAVVAGL), 404–424 (VSKITVLILGVIAIILGVLFE), 428–448 (IAFMVGLAFAIAASCNFPIIL), 464–484 (GGWLGLITAVVLMILGPTIWV), and 493–513 (IFPYEYPALFSISVAFLGIWF).

It belongs to the sodium:solute symporter (SSF) (TC 2.A.21) family.

It is found in the cell inner membrane. In terms of biological role, transports acetate. The protein is Cation/acetate symporter ActP of Escherichia coli O17:K52:H18 (strain UMN026 / ExPEC).